The primary structure comprises 306 residues: Pyridoxal 5'-phosphate synthase subunit PdxS (306 aa).

Residue Asp36 coordinates D-ribose 5-phosphate. Lys93 acts as the Schiff-base intermediate with D-ribose 5-phosphate in catalysis. D-ribose 5-phosphate is bound at residue Gly165. A D-glyceraldehyde 3-phosphate-binding site is contributed by Arg177. D-ribose 5-phosphate-binding positions include Gly226 and 247-248 (GS).

Belongs to the PdxS/SNZ family. In terms of assembly, in the presence of PdxT, forms a dodecamer of heterodimers.

The enzyme catalyses aldehydo-D-ribose 5-phosphate + D-glyceraldehyde 3-phosphate + L-glutamine = pyridoxal 5'-phosphate + L-glutamate + phosphate + 3 H2O + H(+). Its pathway is cofactor biosynthesis; pyridoxal 5'-phosphate biosynthesis. Catalyzes the formation of pyridoxal 5'-phosphate from ribose 5-phosphate (RBP), glyceraldehyde 3-phosphate (G3P) and ammonia. The ammonia is provided by the PdxT subunit. Can also use ribulose 5-phosphate and dihydroxyacetone phosphate as substrates, resulting from enzyme-catalyzed isomerization of RBP and G3P, respectively. This is Pyridoxal 5'-phosphate synthase subunit PdxS from Nocardia farcinica (strain IFM 10152).